The primary structure comprises 59 residues: LQHRTFCKLPAEPGPCKASIPAFYYNWAAKKCQLFHYGGCKGNANRFSTIEKCRRACVG.

One can recognise a BPTI/Kunitz inhibitor domain in the interval 7–57; that stretch reads CKLPAEPGPCKASIPAFYYNWAAKKCQLFHYGGCKGNANRFSTIEKCRRAC. 3 cysteine pairs are disulfide-bonded: cysteine 7–cysteine 57, cysteine 16–cysteine 40, and cysteine 32–cysteine 53.

The protein belongs to the venom Kunitz-type family. As to expression, expressed by the venom gland.

It localises to the secreted. DaE1 and DaE2 are serine protease inhibitors that inhibit voltage-gated potassium channels Kv1.1/KCNA1 channels (IC(50)=300 nM). The polypeptide is Kunitz-type serine protease inhibitor dendrotoxin DaE1 (Dendroaspis angusticeps (Eastern green mamba)).